The sequence spans 486 residues: Cardiolipin synthase A (486 aa).

The next 2 helical transmembrane spans lie at 3-23 (TFYT…IAGV) and 38-58 (MAWL…YLSV). PLD phosphodiesterase domains lie at 219 to 246 (MDLR…VDPR) and 399 to 426 (EGGL…DMRS). Catalysis depends on residues H224, K226, D231, H404, K406, and D411.

This sequence belongs to the phospholipase D family. Cardiolipin synthase subfamily. ClsA sub-subfamily.

It localises to the cell inner membrane. It carries out the reaction 2 a 1,2-diacyl-sn-glycero-3-phospho-(1'-sn-glycerol) = a cardiolipin + glycerol. Its function is as follows. Catalyzes the reversible phosphatidyl group transfer from one phosphatidylglycerol molecule to another to form cardiolipin (CL) (diphosphatidylglycerol) and glycerol. The protein is Cardiolipin synthase A of Cronobacter sakazakii (strain ATCC BAA-894) (Enterobacter sakazakii).